The sequence spans 170 residues: Type IV pilus assembly protein C (170 aa).

The signal sequence occupies residues 1–23 (MKSKLPLILINLSLISSPLGANA). The tract at residues 87–107 (KTVSKPAKSNTPPQQAPVNNS) is disordered. The segment covering 93-107 (AKSNTPPQQAPVNNS) has biased composition (polar residues). Residues 109–166 (RSILEAELSNERKALTEAQKMLSQARLAKGGNINHQKINALQSNVLDRQQNIQALQRE) adopt a coiled-coil conformation.

It is found in the periplasm. Required for stabilizing type IV pilus (T4p) in extended, nonretracted conformation on the bacterial cell surface. In Neisseria gonorrhoeae (strain ATCC 700825 / FA 1090), this protein is Type IV pilus assembly protein C.